A 267-amino-acid chain; its full sequence is Farnesyl diphosphate phosphatase YisP (267 aa).

Belongs to the phytoene/squalene synthase family. Monomer.

It catalyses the reaction (2E,6E)-farnesyl diphosphate + H2O = (2E,6E)-farnesol + diphosphate. Diphosphate release from FPP is inhibited by zaragozic acid. Its function is as follows. A farnesyl diphosphate (FPP) phosphatase. Involved in biofilm formation, its disruption blocks biofilm synthesis which is restored by exogenous farnesol. Releases diphosphate from FPP, was initally suggested to be a squalene synthase. Diphosphate release is higher from FPP than geranyl pyrophosphate (GPP) or geranylgeranyl pyrophosphate (GGPP). Biofilm synthesis is partially restored by exogenous squalene, beta-carotene or retinol. Required for integrity of cell membrane lipid rafts. Involved in spatial organization of membranes, required for the flotillin-like proteins FloT and FloA to function correctly. The polypeptide is Farnesyl diphosphate phosphatase YisP (yisP) (Bacillus subtilis (strain 168)).